The sequence spans 392 residues: Na(+)/H(+) antiporter NhaA (392 aa).

Transmembrane regions (helical) follow at residues 17–37, 59–79, 95–115, 125–145, 154–174, 179–199, 213–233, 254–274, 290–310, 328–348, and 363–383; these read ILLIVAAIIALIMANTPLSAL, LILWVNDALMAIFFLVVGLEV, IFPAIAAVGGMLAPALIYLFF, GWAIPAATDIAFALGVMALLG, VFLLALAIIDDLGVIVIIALF, VALVPLLLAALITIMLFILNW, FILWVCILKSGIHATIAGVIV, VLHPWVAYLILPLFAFSNAGV, VGIALGLFLGKPIGIFLFSWV, IFAVSVLCGIGFTMSIFIAGL, and LGILVGSTMAAVVGYLLLNSV.

It belongs to the NhaA Na(+)/H(+) (TC 2.A.33) antiporter family.

Its subcellular location is the cell inner membrane. The enzyme catalyses Na(+)(in) + 2 H(+)(out) = Na(+)(out) + 2 H(+)(in). Its function is as follows. Na(+)/H(+) antiporter that extrudes sodium in exchange for external protons. This Proteus mirabilis (strain HI4320) protein is Na(+)/H(+) antiporter NhaA.